The chain runs to 87 residues: MKTKLNELLEFPCVFTYKVMGEAKPELVDLVVEVVQRHAPGDYTPQIKPSSKGNYHSVSITITATHIEQVETLYEELGNIDIVRMVL.

Belongs to the UPF0250 family.

The protein is UPF0250 protein PC1_1177 of Pectobacterium carotovorum subsp. carotovorum (strain PC1).